A 148-amino-acid polypeptide reads, in one-letter code: Thioredoxin H8 (148 aa).

Residues 1-145 (MGANVSTPDQ…LERKLNKYTQ (145 aa)) enclose the Thioredoxin domain. Catalysis depends on nucleophile residues Cys71 and Cys74. Cys71 and Cys74 are disulfide-bonded.

Belongs to the thioredoxin family. Plant H-type subfamily.

It localises to the cytoplasm. Functionally, probable thiol-disulfide oxidoreductase that may be involved in the redox regulation of a number of cytosolic enzymes. The protein is Thioredoxin H8 (TRX8) of Arabidopsis thaliana (Mouse-ear cress).